A 322-amino-acid chain; its full sequence is ATP-dependent 6-phosphofructokinase (322 aa).

Residue glycine 11 participates in ATP binding. 21–25 (RAVVR) contacts ADP. ATP is bound by residues 72 to 73 (RC) and 102 to 105 (GDGS). Aspartate 103 is a binding site for Mg(2+). Position 127-129 (127-129 (TID)) interacts with substrate. The active-site Proton acceptor is aspartate 129. Arginine 156 serves as a coordination point for ADP. Substrate is bound by residues arginine 164 and 171-173 (MGR). Residues 187–189 (GAE), arginine 213, and 215–217 (KKH) contribute to the ADP site. Substrate contacts are provided by residues glutamate 224, arginine 245, and 251–254 (HVQR).

Belongs to the phosphofructokinase type A (PFKA) family. ATP-dependent PFK group I subfamily. Prokaryotic clade 'B1' sub-subfamily. In terms of assembly, homotetramer. Mg(2+) is required as a cofactor.

The protein resides in the cytoplasm. The catalysed reaction is beta-D-fructose 6-phosphate + ATP = beta-D-fructose 1,6-bisphosphate + ADP + H(+). It functions in the pathway carbohydrate degradation; glycolysis; D-glyceraldehyde 3-phosphate and glycerone phosphate from D-glucose: step 3/4. Allosterically activated by ADP and other diphosphonucleosides, and allosterically inhibited by phosphoenolpyruvate. Catalyzes the phosphorylation of D-fructose 6-phosphate to fructose 1,6-bisphosphate by ATP, the first committing step of glycolysis. The polypeptide is ATP-dependent 6-phosphofructokinase (Staphylococcus aureus (strain MRSA252)).